A 324-amino-acid chain; its full sequence is tRNA pseudouridine synthase B (324 aa).

Substrate is bound at residue His-43. Asp-48 serves as the catalytic Nucleophile. Residues Tyr-76, Tyr-179, and Leu-200 each contribute to the substrate site.

The protein belongs to the pseudouridine synthase TruB family. Type 1 subfamily.

It carries out the reaction uridine(55) in tRNA = pseudouridine(55) in tRNA. Responsible for synthesis of pseudouridine from uracil-55 in the psi GC loop of transfer RNAs. This Yersinia pestis bv. Antiqua (strain Nepal516) protein is tRNA pseudouridine synthase B.